Here is a 744-residue protein sequence, read N- to C-terminus: Leucine-rich repeat extensin-like protein 1 (744 aa).

Positions M1 to A26 are cleaved as a signal peptide. N-linked (GlcNAc...) asparagine glycosylation is found at N71 and N77. LRR repeat units follow at residues L122–R145, K147–L170, P171–R194, L196–S217, V219–M240, G241–L265, K266–M289, K290–L313, and N315–S336. The N-linked (GlcNAc...) asparagine glycan is linked to N253. N-linked (GlcNAc...) asparagine glycans are attached at residues N318 and N344. The stretch at F381–Y404 is one LRR 10 repeat. Positions S382–Y744 are contains the Ser-Pro(4) repeats. 4 disordered regions span residues P408–P445, V518–S537, P555–P576, and P658–Y744. Residues S430 to Y439 show a composition bias toward low complexity. Residues Y704 to P729 are compositionally biased toward pro residues.

In terms of processing, hydroxylated on proline residues in the S-P-P-P-P repeat. O-glycosylated on hydroxyprolines. As to expression, expressed in root hair cells (at protein level).

It localises to the secreted. Its subcellular location is the cell wall. Its function is as follows. Modulates cell morphogenesis by regulating cell wall formation and assembly, and/or growth polarization. Together with LRX2, component of the extracellular mechanism regulating root hair morphogenesis and elongation. The protein is Leucine-rich repeat extensin-like protein 1 (LRX1) of Arabidopsis thaliana (Mouse-ear cress).